Consider the following 173-residue polypeptide: Nuclear transcription factor Y subunit B-8 (173 aa).

The segment at 1-30 (MAESQAKSPGGCGSHESGGDQSPRSLHVRE) is disordered. At Ala-2 the chain carries N-acetylalanine. A DNA-binding region spans residues 35–41 (LPIANIS). The subunit association domain (SAD) stretch occupies residues 62–73 (VQECVSEFISFV). A disordered region spans residues 123 to 173 (DTKGSAKGGDPNAKKDGQSSQNGQFSQLAHQGPYGNSQAQQHMMVPMPGTD). A compositionally biased stretch (polar residues) spans 140 to 163 (QSSQNGQFSQLAHQGPYGNSQAQQ).

This sequence belongs to the NFYB/HAP3 subunit family. As to quaternary structure, heterotrimeric transcription factor composed of three components, NF-YA, NF-YB and NF-YC. NF-YB and NF-YC must interact and dimerize for NF-YA association and DNA binding. In terms of tissue distribution, expressed in flowers and mature rosettes.

It is found in the nucleus. Functionally, component of the NF-Y/HAP transcription factor complex. The NF-Y complex stimulates the transcription of various genes by recognizing and binding to a CCAAT motif in promoters. The protein is Nuclear transcription factor Y subunit B-8 (NFYB8) of Arabidopsis thaliana (Mouse-ear cress).